We begin with the raw amino-acid sequence, 2215 residues long: Unconventional myosin-VIIa (2215 aa).

The Myosin motor domain occupies 65-741 (HGVEDMIRLG…HDMLLEVERD (677 aa)). Residue 158–165 (GESGAGKT) participates in ATP binding. An actin-binding region spans residues 632–639 (FVRCIKPN). IQ domains follow at residues 745–765 (TDRV…SNFL), 768–788 (KSAA…KNYE), 791–811 (RLGF…KQYR), 814–834 (RQRI…KAFR), and 837–857 (LWAV…RLHR). Residues 858 to 935 (RLRVEYQRRL…LEQMEKARHE (78 aa)) are SAH. The MyTH4 1 domain maps to 1017 to 1253 (YTRRPLKQPL…PSWLELQATK (237 aa)). An FERM 1 domain is found at 1258–1602 (IMLPVTFMDG…LVVTFLEGLR (345 aa)). Thr1563 carries the post-translational modification Phosphothreonine. Ser1569 carries the post-translational modification Phosphoserine. Thr1571 carries the post-translational modification Phosphothreonine. Residues 1603 to 1672 (KRSKYVVALQ…PTDCVYVMPT (70 aa)) enclose the SH3 domain. Residues 1747 to 1896 (HTREPLKQAL…PHLVEVEAIQ (150 aa)) form the MyTH4 2 domain. Positions 1902–2205 (IFHKVYFPDD…SYISQMLTAM (304 aa)) constitute an FERM 2 domain.

Belongs to the TRAFAC class myosin-kinesin ATPase superfamily. Myosin family. Might homodimerize in a two headed molecule through the formation of a coiled-coil rod. Identified in a complex with USH1C and USH1G. Interacts with MYRIP. Interacts with RPE65. Interacts with CIB2. May interact with CALM. Interacts with WHRN. Interacts with PLEKHB1 (via PH domain). Interacts with PCDH15. Interacts with TWF2. Interacts with USH1G. Interacts with MYH9. Interacts (via MyTH4-FERM domains) with cytoplasmic regions of ADGRV1 and USH2A. Interacts with PDZD7 (via MyTH4-FERM domains). Interacts with CALML4. In terms of tissue distribution, detected in mechanosensory stereocilia of cochlea hair cells (at protein level). Expressed in the retina, cochlea, kidney and liver.

Its subcellular location is the cytoplasm. The protein resides in the cell cortex. The protein localises to the cytoskeleton. It localises to the synapse. Myosins are actin-based motor molecules with ATPase activity. Unconventional myosins serve in intracellular movements. Their highly divergent tails bind to membranous compartments, which are then moved relative to actin filaments. In the retina, plays an important role in the renewal of the outer photoreceptor disks. Plays an important role in the distribution and migration of retinal pigment epithelial (RPE) melanosomes and phagosomes, and in the regulation of opsin transport in retinal photoreceptors. Mediates intracellular transport of RPE65 in the retina pigment epithelium. In the inner ear, plays an important role in differentiation, morphogenesis and organization of cochlear hair cell bundles. Motor protein that is a part of the functional network formed by USH1C, USH1G, CDH23 and MYO7A that mediates mechanotransduction in cochlear hair cells. Required for normal hearing. Involved in hair-cell vesicle trafficking of aminoglycosides, which are known to induce ototoxicity. The protein is Unconventional myosin-VIIa (Myo7a) of Mus musculus (Mouse).